The chain runs to 84 residues: MSILSFLLGEKKKSAAVAKERLQLIIAHERVGGRPPADYLPALQKELVAVISKYVKISNDDIRVSLERQDDLEVLEVKIEIPQA.

It belongs to the MinE family.

In terms of biological role, prevents the cell division inhibition by proteins MinC and MinD at internal division sites while permitting inhibition at polar sites. This ensures cell division at the proper site by restricting the formation of a division septum at the midpoint of the long axis of the cell. The sequence is that of Cell division topological specificity factor from Burkholderia mallei (strain NCTC 10247).